The following is a 362-amino-acid chain: S-adenosylmethionine decarboxylase proenzyme (362 aa).

Catalysis depends on residues E13 and E16. S73 (schiff-base intermediate with substrate; via pyruvic acid) is an active-site residue. A Pyruvic acid (Ser); by autocatalysis modification is found at S73. Catalysis depends on C87, which acts as the Proton donor; for catalytic activity. Active-site proton acceptor; for processing activity residues include S236 and H249.

It belongs to the eukaryotic AdoMetDC family. The cofactor is pyruvate. Post-translationally, is synthesized initially as an inactive proenzyme. Formation of the active enzyme involves a self-maturation process in which the active site pyruvoyl group is generated from an internal serine residue via an autocatalytic post-translational modification. Two non-identical subunits are generated from the proenzyme in this reaction, and the pyruvate is formed at the N-terminus of the alpha chain, which is derived from the carboxyl end of the proenzyme. The post-translation cleavage follows an unusual pathway, termed non-hydrolytic serinolysis, in which the side chain hydroxyl group of the serine supplies its oxygen atom to form the C-terminus of the beta chain, while the remainder of the serine residue undergoes an oxidative deamination to produce ammonia and the pyruvoyl group blocking the N-terminus of the alpha chain.

The catalysed reaction is S-adenosyl-L-methionine + H(+) = S-adenosyl 3-(methylsulfanyl)propylamine + CO2. Its pathway is amine and polyamine biosynthesis; S-adenosylmethioninamine biosynthesis; S-adenosylmethioninamine from S-adenosyl-L-methionine: step 1/1. The chain is S-adenosylmethionine decarboxylase proenzyme (SAMDC) from Datura stramonium (Jimsonweed).